The sequence spans 469 residues: 3-isopropylmalate dehydratase large subunit (469 aa).

C347, C408, and C411 together coordinate [4Fe-4S] cluster.

It belongs to the aconitase/IPM isomerase family. LeuC type 1 subfamily. Heterodimer of LeuC and LeuD. [4Fe-4S] cluster is required as a cofactor.

It carries out the reaction (2R,3S)-3-isopropylmalate = (2S)-2-isopropylmalate. Its pathway is amino-acid biosynthesis; L-leucine biosynthesis; L-leucine from 3-methyl-2-oxobutanoate: step 2/4. In terms of biological role, catalyzes the isomerization between 2-isopropylmalate and 3-isopropylmalate, via the formation of 2-isopropylmaleate. The chain is 3-isopropylmalate dehydratase large subunit from Actinobacillus pleuropneumoniae serotype 7 (strain AP76).